The sequence spans 218 residues: Structural protein V19 (218 aa).

Its subcellular location is the virion. This is Structural protein V19 from Sputnik virophage.